The sequence spans 322 residues: Malate dehydrogenase (322 aa).

NAD(+) is bound by residues 10–15 (GSGQIG) and Asp-34. Positions 83 and 89 each coordinate substrate. NAD(+)-binding positions include Asn-96 and 119 to 121 (ITN). Positions 121 and 152 each coordinate substrate. His-176 acts as the Proton acceptor in catalysis.

This sequence belongs to the LDH/MDH superfamily. MDH type 3 family.

The catalysed reaction is (S)-malate + NAD(+) = oxaloacetate + NADH + H(+). Catalyzes the reversible oxidation of malate to oxaloacetate. In Bradyrhizobium sp. (strain ORS 278), this protein is Malate dehydrogenase.